Reading from the N-terminus, the 553-residue chain is MVQRLWVSRLLRHRKAQLLLVNLLTFGLEVCLAAGITYVPPLLLEVGVEEKFMTMVLGIGPVLGLVCVPLLGSASDHWRGRYGRRRPFIWALSLGILLSLFLIPRAGWLAGLLCPDPRPLELALLILGVGLLDFCGQVCFTPLEALLSDLFRDPDHCRQAYSVYAFMISLGGCLGYLLPAIDWDTSALAPYLGTQEECLFGLLTLIFLTCVAATLLVAEEAALGPTEPAEGLSAPSLSPHCCPCRARLAFRNLGALLPRLHQLCCRMPRTLRRLFVAELCSWMALMTFTLFYTDFVGEGLYQGVPRAEPGTEARRHYDEGVRMGSLGLFLQCAISLVFSLVMDRLVQRFGTRAVYLASVAAFPVAAGATCLSHSVAVVTASAALTGFTFSALQILPYTLASLYHREKQVFLPKYRGDTGGASSEDSLMTSFLPGPKPGAPFPNGHVGAGGSGLLPPPPALCGASACDVSVRVVVGEPTEARVVPGRGICLDLAILDSAFLLSQVAPSLFMGSIVQLSQSVTAYMVSAAGLGLVAIYFATQVVFDKSDLAKYSA.

A run of 11 helical transmembrane segments spans residues 19–39 (LLVNLLTFGLEVCLAAGITYV), 52–72 (FMTMVLGIGPVLGLVCVPLLG), 88–108 (FIWALSLGILLSLFLIPRAGW), 120–140 (LELALLILGVGLLDFCGQVCF), 161–181 (YSVYAFMISLGGCLGYLLPAI), 198–218 (CLFGLLTLIFLTCVAATLLVA), 275–295 (FVAELCSWMALMTFTLFYTDF), 323–343 (MGSLGLFLQCAISLVFSLVMD), 353–373 (AVYLASVAAFPVAAGATCLSH), 382–402 (AALTGFTFSALQILPYTLASL), and 522–542 (AYMVSAAGLGLVAIYFATQVV).

Belongs to the glycoside-pentoside-hexuronide (GPH) cation symporter transporter (TC 2.A.2) family. As to expression, prostate specific. Expressed in all prostatic glandular cells. Expressed both in normal and cancerous prostates.

It localises to the membrane. It carries out the reaction sucrose(out) + H(+)(out) = sucrose(in) + H(+)(in). Its function is as follows. Proton-associated sucrose transporter. May be able to transport also glucose and fructose. This chain is Solute carrier family 45 member 3, found in Homo sapiens (Human).